Here is a 390-residue protein sequence, read N- to C-terminus: UDP-galactose translocator (390 aa).

The segment at 1-24 is disordered; sequence MAAVGVGGSTAAAGAGAVSSGALE. A run of 10 helical transmembrane segments spans residues 3 to 23, 37 to 57, 65 to 85, 97 to 117, 140 to 160, 169 to 189, 200 to 220, 238 to 258, 269 to 289, and 315 to 335; these read AVGV…SGAL, YISL…IRYA, FFAT…CLLL, LVLF…KLAV, TFQV…VLML, WASL…QAGG, GAGL…GVYF, LGLF…GTAV, PAVW…AVVV, and LFGF…IGAV. A compositionally biased stretch (low complexity) spans 9-22; it reads STAAAGAGAVSSGA. The tract at residues 356–390 is disordered; it reads PCIHQQPPGQPPPPQLSSRGDLTTEPFLPKSVLVK.

This sequence belongs to the nucleotide-sugar transporter family. SLC35A subfamily. As to quaternary structure, interacts with SLC35A3; the interaction is reduced in the presence of SLC35A4. Found in a complex with SLC35A3 and SLC35A4.

It localises to the golgi apparatus membrane. The enzyme catalyses UMP(out) + UDP-alpha-D-galactose(in) = UMP(in) + UDP-alpha-D-galactose(out). It catalyses the reaction UDP-N-acetyl-alpha-D-galactosamine(in) + UMP(out) = UDP-N-acetyl-alpha-D-galactosamine(out) + UMP(in). It carries out the reaction UMP(out) + UDP-alpha-D-glucose(in) = UMP(in) + UDP-alpha-D-glucose(out). The catalysed reaction is UMP(out) + UDP-N-acetyl-alpha-D-glucosamine(in) = UMP(in) + UDP-N-acetyl-alpha-D-glucosamine(out). The enzyme catalyses UDP-alpha-D-galactose(in) + AMP(out) = UDP-alpha-D-galactose(out) + AMP(in). It catalyses the reaction UDP-alpha-D-galactose(in) + CMP(out) = UDP-alpha-D-galactose(out) + CMP(in). It carries out the reaction UDP-N-acetyl-alpha-D-galactosamine(out) + UDP-alpha-D-galactose(in) = UDP-N-acetyl-alpha-D-galactosamine(in) + UDP-alpha-D-galactose(out). The catalysed reaction is UDP-N-acetyl-alpha-D-glucosamine(out) + UDP-alpha-D-galactose(in) = UDP-N-acetyl-alpha-D-glucosamine(in) + UDP-alpha-D-galactose(out). The enzyme catalyses UDP-alpha-D-galactose(in) + UDP-alpha-D-glucose(out) = UDP-alpha-D-galactose(out) + UDP-alpha-D-glucose(in). It catalyses the reaction UMP(out) + CMP(in) = UMP(in) + CMP(out). It carries out the reaction UMP(out) + AMP(in) = UMP(in) + AMP(out). Functionally, transports uridine diphosphate galactose (UDP-galactose) from the cytosol into the Golgi apparatus. It functions as an antiporter that exchanges UDP-galactose for UMP. It is also able to exchange UDP-galactose for AMP and CMP, and to transport UDP-N-acetylgalactosamine (UDP-GalNAc) and other nucleotide sugars. As a provider of UDP-galactose to galactosyltransferases present in the Golgi apparatus, it is necessary for globotriaosylceramide/globoside (Gb3Cer) synthesis from lactosylceramide. This is UDP-galactose translocator from Mus musculus (Mouse).